Here is a 789-residue protein sequence, read N- to C-terminus: ATP-dependent 6-phosphofructokinase (789 aa).

The segment at 1 to 404 (MSLKRNIRRL…NLETYKLLTK (404 aa)) is N-terminal catalytic PFK domain 1. Residues glycine 41, 104–105 (RC), and 134–137 (GDGS) contribute to the ATP site. A Mg(2+)-binding site is contributed by aspartate 135. Residues 180–182 (SID), arginine 217, 224–226 (MGR), glutamate 280, arginine 307, and 313–316 (HVQR) contribute to the substrate site. Aspartate 182 functions as the Proton acceptor in the catalytic mechanism. Residues 405–419 (LRTVEKDNLSGGQNF) form an interdomain linker region. The tract at residues 420-789 (NVAVMNVGAP…EAMEDTEDYD (370 aa)) is C-terminal regulatory PFK domain 2. Beta-D-fructose 2,6-bisphosphate is bound by residues lysine 489, 547–551 (TISNN), arginine 585, 592–594 (MGG), glutamate 647, arginine 673, 679–682 (HAQQ), and arginine 753.

Belongs to the phosphofructokinase type A (PFKA) family. ATP-dependent PFK group I subfamily. Eukaryotic two domain clade 'E' sub-subfamily. Homotetramer. Requires Mg(2+) as cofactor.

Its subcellular location is the cytoplasm. It catalyses the reaction beta-D-fructose 6-phosphate + ATP = beta-D-fructose 1,6-bisphosphate + ADP + H(+). It functions in the pathway carbohydrate degradation; glycolysis; D-glyceraldehyde 3-phosphate and glycerone phosphate from D-glucose: step 3/4. Allosterically activated by ADP, AMP, or fructose 2,6-bisphosphate, and allosterically inhibited by ATP or citrate. Functionally, catalyzes the phosphorylation of D-fructose 6-phosphate to fructose 1,6-bisphosphate by ATP, the first committing step of glycolysis. The chain is ATP-dependent 6-phosphofructokinase (PFK) from Haemonchus contortus (Barber pole worm).